Here is a 146-residue protein sequence, read N- to C-terminus: Neuropeptide Y receptor type 2 (146 aa).

Residues 1 to 8 (KMGPVLCH) are Extracellular-facing. An intrachain disulfide couples Cys7 to Cys87. Residues 9–29 (LVPYAQGLAVQVSTITLTVIA) form a helical membrane-spanning segment. Over 30–49 (LDRHRCIVYHLESKISKQIS) the chain is Cytoplasmic. Residues 50-70 (FLIIGLAWGVSALLASPLAIF) traverse the membrane as a helical segment. The Extracellular portion of the chain corresponds to 71–100 (REYSLIEIIPDFEIVACTEKWPGEEKGIYG). A helical transmembrane segment spans residues 101 to 121 (TVYSLLSLLILYVLPLGIISF). Topologically, residues 122–146 (SYARIWSKLKNHVSPGAAHDHYHQR) are cytoplasmic.

It belongs to the G-protein coupled receptor 1 family.

The protein localises to the cell membrane. Its function is as follows. Receptor for neuropeptide Y and peptide YY. The sequence is that of Neuropeptide Y receptor type 2 (NPY2R) from Ovis aries (Sheep).